Here is a 128-residue protein sequence, read N- to C-terminus: Ribonuclease P protein component (128 aa).

This sequence belongs to the RnpA family. As to quaternary structure, consists of a catalytic RNA component (M1 or rnpB) and a protein subunit.

The enzyme catalyses Endonucleolytic cleavage of RNA, removing 5'-extranucleotides from tRNA precursor.. In terms of biological role, RNaseP catalyzes the removal of the 5'-leader sequence from pre-tRNA to produce the mature 5'-terminus. It can also cleave other RNA substrates such as 4.5S RNA. The protein component plays an auxiliary but essential role in vivo by binding to the 5'-leader sequence and broadening the substrate specificity of the ribozyme. The sequence is that of Ribonuclease P protein component from Prochlorococcus marinus (strain AS9601).